We begin with the raw amino-acid sequence, 273 residues long: SET domain-containing protein 9 (273 aa).

The 174-residue stretch at 96-269 folds into the SET domain; that stretch reads FSVAQATSSL…QGEELFSNYY (174 aa). S-adenosyl-L-methionine is bound at residue tyrosine 268.

This sequence belongs to the class V-like SAM-binding methyltransferase superfamily.

This is SET domain-containing protein 9 (SETD9) from Pongo abelii (Sumatran orangutan).